Reading from the N-terminus, the 236-residue chain is Probable transcriptional regulatory protein UU295 (236 aa).

The protein belongs to the TACO1 family.

It is found in the cytoplasm. The sequence is that of Probable transcriptional regulatory protein UU295 from Ureaplasma parvum serovar 3 (strain ATCC 700970).